The following is a 195-amino-acid chain: Ferredoxin-2, mitochondrial (195 aa).

The transit peptide at 1–61 (MAAAAAVRAG…RRLRTSIGVC (61 aa)) directs the protein to the mitochondrion. The 2Fe-2S ferredoxin-type domain maps to 81–182 (NVVYIDRSGR…GMELTLPKVT (102 aa)). Cysteine 117, cysteine 123, cysteine 126, and cysteine 163 together coordinate [2Fe-2S] cluster.

It belongs to the adrenodoxin/putidaredoxin family. Component of the mitochondrial core iron-sulfur cluster (ISC) complex composed of NFS1, LYRM4, NDUFAB1, ISCU, FXN, and FDX2; this complex is a heterohexamer containing two copies of each monomer. Form a heterodimer complex with NFS1. [2Fe-2S] cluster is required as a cofactor.

It is found in the mitochondrion. Its subcellular location is the mitochondrion matrix. Its function is as follows. Electron donor, of the core iron-sulfur cluster (ISC) assembly complex, that acts to reduce the persulfide into sulfide during [2Fe-2S] clusters assembly on the scaffolding protein ISCU. The core iron-sulfur cluster (ISC) assembly complex is involved in the de novo synthesis of a [2Fe-2S] cluster, the first step of the mitochondrial iron-sulfur protein biogenesis. This process is initiated by the cysteine desulfurase complex (NFS1:LYRM4:NDUFAB1) that produces persulfide which is delivered on the scaffold protein ISCU in a FXN-dependent manner. Then this complex is stabilized by FDX2 which provides reducing equivalents to accomplish the [2Fe-2S] cluster assembly. Finally, the [2Fe-2S] cluster is transferred from ISCU to chaperone proteins, including HSCB, HSPA9 and GLRX5. Essential for coenzyme Q biosynthesis: together with FDXR, transfers the electrons required for the hydroxylation reaction performed by COQ6. This chain is Ferredoxin-2, mitochondrial, found in Danio rerio (Zebrafish).